The primary structure comprises 340 residues: Heat-inducible transcription repressor HrcA (340 aa).

This sequence belongs to the HrcA family.

Its function is as follows. Negative regulator of class I heat shock genes (grpE-dnaK-dnaJ and groELS operons). Prevents heat-shock induction of these operons. This chain is Heat-inducible transcription repressor HrcA, found in Burkholderia thailandensis (strain ATCC 700388 / DSM 13276 / CCUG 48851 / CIP 106301 / E264).